The chain runs to 353 residues: Methionine import ATP-binding protein MetN (353 aa).

Residues 7 to 249 (LENIDVTFKQ…PKEELSRQFV (243 aa)) enclose the ABC transporter domain. 41–48 (GYSGAGKS) serves as a coordination point for ATP.

This sequence belongs to the ABC transporter superfamily. Methionine importer (TC 3.A.1.24) family. In terms of assembly, the complex is composed of two ATP-binding proteins (MetN), two transmembrane proteins (MetI) and a solute-binding protein (MetQ).

The protein localises to the cell membrane. The catalysed reaction is L-methionine(out) + ATP + H2O = L-methionine(in) + ADP + phosphate + H(+). It catalyses the reaction D-methionine(out) + ATP + H2O = D-methionine(in) + ADP + phosphate + H(+). Part of the ABC transporter complex MetNIQ involved in methionine import. Responsible for energy coupling to the transport system. This chain is Methionine import ATP-binding protein MetN, found in Ligilactobacillus salivarius (strain UCC118) (Lactobacillus salivarius).